The chain runs to 82 residues: Antitoxin MazE2 (82 aa).

Probably forms a complex with cognate toxin MazF2.

Functionally, antitoxin component of a type II toxin-antitoxin (TA) system. Labile antitoxin that binds to cognate MazF2 toxin and counteracts its endoribonuclease activity. The sequence is that of Antitoxin MazE2 (mazE2) from Mycobacterium bovis (strain ATCC BAA-935 / AF2122/97).